Here is a 29-residue protein sequence, read N- to C-terminus: Brevinin-2Rd (29 aa).

Cysteine 23 and cysteine 29 are oxidised to a cystine.

In terms of tissue distribution, expressed by the skin glands.

Its subcellular location is the secreted. Functionally, antimicrobial peptide. This chain is Brevinin-2Rd, found in Pelophylax ridibundus (Marsh frog).